The chain runs to 483 residues: Cyclic AMP-dependent transcription factor ATF-7 (483 aa).

The interval 1–285 is transactivation domain; sequence MGDDRPFVCN…GMVVGTASTM (285 aa). The segment at 7–31 adopts a C2H2-type zinc-finger fold; sequence FVCNAPGCGQRFTNEDHLAVHKHKH. Position 51 is a phosphothreonine; by MAPK11 (threonine 51). Phosphothreonine occurs at positions 53 and 101. A Glycyl lysine isopeptide (Lys-Gly) (interchain with G-Cter in SUMO1) cross-link involves residue lysine 107. 2 disordered regions span residues 110 to 148 and 299 to 345; these read EPVEVDSSPPDSPASSPCSPPLKEKEVTPKPVLISTPTP and HPDA…NRAA. Composition is skewed to low complexity over residues 114–126 and 307–320; these read VDSSPPDSPASSP and QPQVSPAQPTPSTG. The interval 325–483 is essential for binding adenovirus 2 E1A; that stretch reads RTVDEDPDER…MTPQSQSAGR (159 aa). Over residues 326–343 the composition is skewed to basic and acidic residues; that stretch reads TVDEDPDERRQRFLERNR. Residues 332-395 form the bZIP domain; it reads DERRQRFLER…AQLKQLLLAH (64 aa). Residues 334–354 are basic motif; it reads RRQRFLERNRAAASRCRQKRK. A leucine-zipper region spans residues 360 to 388; the sequence is LEKKAEELTSQNIQLSNEVTLLRNEVAQL. Positions 407–439 are disordered; it reads TQGYLESPKESSEPTGSPAPVIQHSSATAPSNG. 2 positions are modified to phosphoserine: serine 413 and serine 423. Residues 429–439 are compositionally biased toward polar residues; sequence QHSSATAPSNG.

This sequence belongs to the bZIP family. Homodimer; binds DNA as homodimer. Heterodimer; heterodimerizes with other members of ATF family and with JUN family members. Interacts with JNK2; the interaction does not phosphorylate ATF7 but acts as a docking site for other ATF-associated partners such as JUN family members. Interacts (via its transactivation domain) with TAF12 (isoforms TAFII15 and TAFII20); the interaction potentiates the transactivation activity (isoform TAFII20 only) and is inhibited by ATF7 sumoylation. Interacts with TAF4; the interaction inhibits the TAF12-dependent transactivation. Interacts with MAPK9; the interaction does not phosphorylate ATF7 but acts as a docking site for ATF7-associated partners such as JUN. Interacts with Ku complex components XRCC6 and XRCC7. Interacts with TERT. In terms of assembly, (Microbial infection) Interacts with adenovirus 2 E1A; the interaction enhances the ATF7-mediated viral transactivation activity which requires the zinc-binding domains of both E1A and ATF7. In terms of processing, on EGF stimulation, phosphorylated first on Thr-53 allowing subsequent phosphorylation on Thr-51. This latter phosphorylation prevents sumoylation, increases binding to TAF12 and enhances transcriptional activity. Sumoylation delays nuclear localization and inhibits transactivation activity through preventing binding to TAF12. RANBP2 appears to be the specific E3 ligase. Post-translationally, on EGF stimulation, phosphorylated first on Thr-53 allowing subsequent phosphorylation on Thr-51. This latter phosphorylation prevents sumoylation, increases binding to TAF12 and enhances transcriptional activity. Social isolation stress as well as TNF-alpha also induce the phosphorylation of ATF7. Phosphorylated in proliferating colonic and small intestinal epithelial cells. In terms of tissue distribution, expressed in various tissues including heart, brain, placenta, lung and skeletal muscle. Highest levels in skeletal muscle. Lowest in lung and placenta. Strongly expressed in skeletal muscle. Also expressed at lower levels in heart and lung.

The protein localises to the nucleus. Its subcellular location is the nucleoplasm. It is found in the chromosome. It localises to the telomere. The protein resides in the cytoplasm. Functionally, stress-responsive chromatin regulator that plays a role in various biological processes including innate immunological memory, adipocyte differentiation or telomerase regulation. In absence of stress, contributes to the formation of heterochromatin and heterochromatin-like structure by recruiting histone H3K9 tri- and di-methyltransferases thus silencing the transcription of target genes such as STAT1 in adipocytes, or genes involved in innate immunity in macrophages and adipocytes. Stress induces ATF7 phosphorylation that disrupts interactions with histone methyltransferase and enhances the association with coactivators containing histone acetyltransferase and/or histone demethylase, leading to disruption of the heterochromatin-like structure and subsequently transcriptional activation. In response to TNF-alpha, which is induced by various stresses, phosphorylated ATF7 and telomerase are released from telomeres leading to telomere shortening. Also plays a role in maintaining epithelial regenerative capacity and protecting against cell death during intestinal epithelial damage and repair. In terms of biological role, acts as a dominant repressor of the E-selectin/NF-ELAM1/delta-A promoter. Its function is as follows. Acts as a negative regulator, inhibiting both ATF2 and ATF7 transcriptional activities. It may exert these effects by sequestrating in the cytoplasm the Thr-53 phosphorylating kinase, preventing activation. This is Cyclic AMP-dependent transcription factor ATF-7 (ATF7) from Homo sapiens (Human).